We begin with the raw amino-acid sequence, 1722 residues long: Signal-induced proliferation-associated 1-like protein 2 (1722 aa).

A compositionally biased stretch (basic and acidic residues) spans 1 to 12; sequence MSDPRQSQEEKH. 2 disordered regions span residues 1–29 and 42–72; these read MSDP…RIMQ and NGNM…PAVP. The segment covering 45–56 has biased composition (polar residues); the sequence is MGPTTSLNASNS. Ser-148 carries the phosphoserine modification. A compositionally biased stretch (polar residues) spans 360-377; the sequence is GASAASQTQMPTGQTGNC. The disordered stretch occupies residues 360 to 401; it reads GASAASQTQMPTGQTGNCESPLGSKEDLNSKENLDADEGDGK. Phosphoserine is present on residues Ser-379 and Ser-383. Residues 383-401 are compositionally biased toward basic and acidic residues; the sequence is SKEDLNSKENLDADEGDGK. The Rap-GAP domain occupies 595-812; sequence LLKLDEQGLS…RTRQEYLKDL (218 aa). The PDZ domain maps to 950–1026; it reads EMTLRRNGLG…VKVVIIQPHD (77 aa). Position 1029 is a phosphoserine (Ser-1029). Disordered stretches follow at residues 1067–1245 and 1330–1360; these read HRVP…FGSG and EGSM…SKSS. Low complexity-rich tracts occupy residues 1093–1102 and 1119–1130; these read QQLLQQAQAA and SSPSNQSSSSDP. Composition is skewed to basic and acidic residues over residues 1164-1183 and 1194-1217; these read DGAR…ETKW and YKER…HIGD. Residues 1219-1236 are compositionally biased toward low complexity; that stretch reads SCSSHSSSNTLSSNTSSN. Ser-1244 is subject to Phosphoserine. Residues 1337–1360 are compositionally biased toward low complexity; it reads SEISSHSSGSHHSGSPSAHCSKSS. Residues Ser-1461, Ser-1472, Ser-1478, Ser-1488, Ser-1549, Ser-1552, and Ser-1591 each carry the phosphoserine modification. Positions 1654-1712 form a coiled coil; that stretch reads LTGKVNQLELILRQLQTDLRKEKQDKAVLQAEVQHLRQDNMRLQEESQTATAQLRKFTE.

The sequence is that of Signal-induced proliferation-associated 1-like protein 2 (SIPA1L2) from Homo sapiens (Human).